A 127-amino-acid polypeptide reads, in one-letter code: Large ribosomal subunit protein eL8 (127 aa).

It belongs to the eukaryotic ribosomal protein eL8 family. Part of the 50S ribosomal subunit. Probably part of the RNase P complex.

It localises to the cytoplasm. In terms of biological role, multifunctional RNA-binding protein that recognizes the K-turn motif in ribosomal RNA, the RNA component of RNase P, box H/ACA, box C/D and box C'/D' sRNAs. The protein is Large ribosomal subunit protein eL8 of Desulfurococcus amylolyticus (strain DSM 18924 / JCM 16383 / VKM B-2413 / 1221n) (Desulfurococcus kamchatkensis).